We begin with the raw amino-acid sequence, 148 residues long: 3-hydroxyacyl-[acyl-carrier-protein] dehydratase FabZ (148 aa).

The active site involves His-47.

This sequence belongs to the thioester dehydratase family. FabZ subfamily.

It is found in the cytoplasm. The catalysed reaction is a (3R)-hydroxyacyl-[ACP] = a (2E)-enoyl-[ACP] + H2O. Its function is as follows. Involved in unsaturated fatty acids biosynthesis. Catalyzes the dehydration of short chain beta-hydroxyacyl-ACPs and long chain saturated and unsaturated beta-hydroxyacyl-ACPs. The polypeptide is 3-hydroxyacyl-[acyl-carrier-protein] dehydratase FabZ (Hydrogenobaculum sp. (strain Y04AAS1)).